The following is a 275-amino-acid chain: Erythroagglutinating phytohemagglutinin (275 aa).

Positions 1–21 are cleaved as a signal peptide; it reads MASSNLLSLALFLVLLTHANS. Asn33 carries N-linked (GlcNAc...) (high mannose) asparagine glycosylation. N-linked (GlcNAc...) asparagine glycosylation is found at Asn81 and Asn101.

The protein belongs to the leguminous lectin family.

This insecticidal carbohydrate-binding lectin is toxic for the cowpea weevil. The polypeptide is Erythroagglutinating phytohemagglutinin (DLEC1) (Phaseolus vulgaris (Kidney bean)).